The sequence spans 116 residues: NADPH-dependent 7-cyano-7-deazaguanine reductase (116 aa).

The active-site Thioimide intermediate is the C31. D38 serves as the catalytic Proton donor. Substrate-binding positions include 53-55 and 72-73; these read IEL and YE.

The protein belongs to the GTP cyclohydrolase I family. QueF type 1 subfamily.

The protein resides in the cytoplasm. The enzyme catalyses 7-aminomethyl-7-carbaguanine + 2 NADP(+) = 7-cyano-7-deazaguanine + 2 NADPH + 3 H(+). The protein operates within tRNA modification; tRNA-queuosine biosynthesis. Functionally, catalyzes the NADPH-dependent reduction of 7-cyano-7-deazaguanine (preQ0) to 7-aminomethyl-7-deazaguanine (preQ1). This is NADPH-dependent 7-cyano-7-deazaguanine reductase from Pelodictyon phaeoclathratiforme (strain DSM 5477 / BU-1).